Here is a 413-residue protein sequence, read N- to C-terminus: Pyruvate dehydrogenase complex subunit homolog DDB_G0271564, mitochondrial (413 aa).

The N-terminal 19 residues, M1–Y19, are a transit peptide targeting the mitochondrion. One can recognise a Peripheral subunit-binding (PSBD) domain in the interval Y29–I67.

The protein belongs to the 2-oxoacid dehydrogenase family.

It is found in the mitochondrion. The pyruvate dehydrogenase complex catalyzes the overall conversion of pyruvate to acetyl-CoA and CO(2). It contains multiple copies of three enzymatic components: pyruvate dehydrogenase (E1), dihydrolipoamide acetyltransferase (E2) and lipoamide dehydrogenase (E3). This chain is Pyruvate dehydrogenase complex subunit homolog DDB_G0271564, mitochondrial (pdhX), found in Dictyostelium discoideum (Social amoeba).